The sequence spans 159 residues: Nutritionally-regulated adipose and cardiac-enriched protein homolog (159 aa).

A disordered region spans residues 1 to 67 (MKTAVHALSP…GDEPRRTTRH (67 aa)). Basic and acidic residues-rich tracts occupy residues 12 to 25 (SRPE…KNEE) and 50 to 63 (SPQE…EPRR). Residues 107-124 (LTACILLALALGMCCGQA) form a helical membrane-spanning segment.

It is found in the cell membrane. The protein is Nutritionally-regulated adipose and cardiac-enriched protein homolog (NRAC) of Bos taurus (Bovine).